We begin with the raw amino-acid sequence, 141 residues long: Transcription antitermination protein NusB (141 aa).

Belongs to the NusB family.

Involved in transcription antitermination. Required for transcription of ribosomal RNA (rRNA) genes. Binds specifically to the boxA antiterminator sequence of the ribosomal RNA (rrn) operons. This chain is Transcription antitermination protein NusB, found in Neisseria meningitidis serogroup A / serotype 4A (strain DSM 15465 / Z2491).